A 143-amino-acid polypeptide reads, in one-letter code: MVSGVKVSDECVYEFNKLKIKHIHKYIIYRIENYEEVIVDFLEQDNSLKSYKDIIIDIRNNLKTTECRYIIADMPIPTPEGVLRNRIYFIFWSPDLAKSKEKMLYASSKEYLVRKINGIFKSLEITCDLEDFEDELRTIILNT.

Residues 4–141 (GVKVSDECVY…FEDELRTIIL (138 aa)) form the ADF-H domain.

This sequence belongs to the actin-binding proteins ADF family. Interacts with monomeric actin, does not bind to actin polymers.

Its subcellular location is the cytoplasm. The protein localises to the cytoskeleton. Its function is as follows. Not involved in actin polymerisation, instead functions to stimulate nucleotide exchange on monomeric actin and influence turnover of the small amount of cytosolic actin microfilaments. Essential for erythrocytic schizogony. The protein is Cofilin/actin-depolymerizing factor homolog 2 of Plasmodium falciparum (isolate 3D7).